Reading from the N-terminus, the 358-residue chain is GMP reductase (358 aa).

NADP(+)-binding positions include 26–27 (SR), K78, 130–132 (DVA), and 181–182 (IG). Residues G182, G184, and C187 each contribute to the K(+) site. C187 functions as the Thioimidate intermediate in the catalytic mechanism. T189 (proton donor/acceptor) is an active-site residue. Residue R190 participates in K(+) binding. Residues 220–222 (DGG), 243–244 (GG), 269–271 (GMS), and 287–291 (RASEG) contribute to the GMP site. NADP(+) is bound by residues M270, 286 to 287 (YR), and 315 to 318 (SACT).

The protein belongs to the IMPDH/GMPR family. GuaC type 1 subfamily. As to quaternary structure, homotetramer.

The catalysed reaction is IMP + NH4(+) + NADP(+) = GMP + NADPH + 2 H(+). Functionally, catalyzes the irreversible NADPH-dependent deamination of GMP to IMP. It functions in the conversion of nucleobase, nucleoside and nucleotide derivatives of G to A nucleotides, and in maintaining the intracellular balance of A and G nucleotides. The protein is GMP reductase of Caenorhabditis elegans.